Here is an 87-residue protein sequence, read N- to C-terminus: Elastase inhibitor AFLEI (87 aa).

Positions 1–19 (MKFSLACLLALAGLQAALA) are cleaved as a signal peptide. Cysteines 24 and 86 form a disulfide.

It is found in the secreted. Elastase inhibitor. The chain is Elastase inhibitor AFLEI from Aspergillus fumigatus (strain CBS 144.89 / FGSC A1163 / CEA10) (Neosartorya fumigata).